Reading from the N-terminus, the 307-residue chain is tRNA pseudouridine synthase B (307 aa).

Residue Asp38 is the Nucleophile of the active site.

It belongs to the pseudouridine synthase TruB family. Type 1 subfamily.

It carries out the reaction uridine(55) in tRNA = pseudouridine(55) in tRNA. Its function is as follows. Responsible for synthesis of pseudouridine from uracil-55 in the psi GC loop of transfer RNAs. The protein is tRNA pseudouridine synthase B of Bacillus anthracis.